We begin with the raw amino-acid sequence, 173 residues long: Helix-loop-helix protein lin-22 (173 aa).

The segment at 21–34 is basic motif; the sequence is KKIKNKPLMEKKRR. The bHLH domain occupies 21–78; the sequence is KKIKNKPLMEKKRRARINKSLSQLKQILIQDEHKNSIQHSKWEKADILEMAVEYLQQL. The interval 35–78 is helix-loop-helix motif; the sequence is ARINKSLSQLKQILIQDEHKNSIQHSKWEKADILEMAVEYLQQL. A compositionally biased stretch (low complexity) spans 83–95; that stretch reads PCSLSPSTSSIST. The segment at 83-102 is disordered; it reads PCSLSPSTSSISTPPTPKEE.

In terms of tissue distribution, expressed mostly in the seam (stem) cells and hypodermis (hyp7), but also to a lesser extent in the intestine.

It is found in the nucleus. Probable transcription factor. During development, required for cell fate specification, probably by promoting or repressing expression of genes involved in specific cell fate. Involved in specifying lineages derived from the epidermal stem cells of the lateral ectoderm, known as seam cells. Modulates symmetric divisions of seam cells, perhaps in concert with the Wnt signaling pathway. May repress expression of homeobox genes mab-5, egl-5 and lin-39. In Caenorhabditis elegans, this protein is Helix-loop-helix protein lin-22.